Consider the following 308-residue polypeptide: D-alanine--D-alanine ligase (308 aa).

The ATP-grasp domain occupies 103–302; sequence KTVMATAGVP…FDELVQWMVE (200 aa). Position 130-184 (130-184) interacts with ATP; the sequence is MAPPYVIKPVADGSSVGVFIVTEDQAHPPQELFRDDWPHGEELLVEKYIAGRELT. The Mg(2+) site is built by Asp-252, Glu-269, and Asn-271.

This sequence belongs to the D-alanine--D-alanine ligase family. Mg(2+) serves as cofactor. The cofactor is Mn(2+).

The protein localises to the cytoplasm. It catalyses the reaction 2 D-alanine + ATP = D-alanyl-D-alanine + ADP + phosphate + H(+). It participates in cell wall biogenesis; peptidoglycan biosynthesis. Functionally, cell wall formation. This chain is D-alanine--D-alanine ligase, found in Afipia carboxidovorans (strain ATCC 49405 / DSM 1227 / KCTC 32145 / OM5) (Oligotropha carboxidovorans).